The chain runs to 182 residues: Large ribosomal subunit protein eL15 (182 aa).

It belongs to the eukaryotic ribosomal protein eL15 family.

In Methanothermobacter thermautotrophicus (strain ATCC 29096 / DSM 1053 / JCM 10044 / NBRC 100330 / Delta H) (Methanobacterium thermoautotrophicum), this protein is Large ribosomal subunit protein eL15 (rpl15e).